The primary structure comprises 330 residues: Calponin-3 (330 aa).

Lys23 is subject to N6-acetyllysine. Residues 26–130 (QQAEEDLRNW…TLVALAGLAK (105 aa)) form the Calponin-homology (CH) domain. N6-methyllysine is present on Lys158. 3 Calponin-like repeats span residues 164-189 (IGLQ…RHLY), 204-229 (ISLQ…RDIY), and 243-268 (ISLQ…RQVY). The disordered stretch occupies residues 279–330 (PVIHNGSQGTGTNGSEISDSDYQAEYPDEYHGEYPDDYPREYQYGDDQGIDY). The span at 306-318 (DEYHGEYPDDYPR) shows a compositional bias: basic and acidic residues.

This sequence belongs to the calponin family.

Its function is as follows. Thin filament-associated protein that is implicated in the regulation and modulation of smooth muscle contraction. It is capable of binding to actin, calmodulin and tropomyosin. The interaction of calponin with actin inhibits the actomyosin Mg-ATPase activity. This Mus musculus (Mouse) protein is Calponin-3 (Cnn3).